Reading from the N-terminus, the 501-residue chain is Flagellin (501 aa).

It belongs to the bacterial flagellin family.

It is found in the secreted. Its subcellular location is the bacterial flagellum. In terms of biological role, flagellin is the subunit protein which polymerizes to form the filaments of bacterial flagella. This chain is Flagellin (flaA), found in Aquifex pyrophilus.